The primary structure comprises 478 residues: Pyruvate kinase (478 aa).

Residue Arg36 participates in substrate binding. Asn38, Ser40, and Asp70 together coordinate K(+). 38–41 is a binding site for ATP; the sequence is NFSH. Residues Arg77 and Lys160 each coordinate ATP. Residue Glu225 coordinates Mg(2+). Substrate is bound by residues Gly251, Asp252, and Thr284. Asp252 contacts Mg(2+).

It belongs to the pyruvate kinase family. In terms of assembly, homotetramer. It depends on Mg(2+) as a cofactor. Requires K(+) as cofactor.

It carries out the reaction pyruvate + ATP = phosphoenolpyruvate + ADP + H(+). It participates in carbohydrate degradation; glycolysis; pyruvate from D-glyceraldehyde 3-phosphate: step 5/5. Allosterically activated by AMP and by several sugar phosphates. Belongs to type II PK. This is Pyruvate kinase (pykA) from Haemophilus influenzae (strain ATCC 51907 / DSM 11121 / KW20 / Rd).